Reading from the N-terminus, the 79-residue chain is Large ribosomal subunit protein uL22 (79 aa).

The protein belongs to the universal ribosomal protein uL22 family. As to quaternary structure, part of the 50S ribosomal subunit.

Functionally, this protein binds specifically to 23S rRNA; its binding is stimulated by other ribosomal proteins, e.g. L4, L17, and L20. It is important during the early stages of 50S assembly. It makes multiple contacts with different domains of the 23S rRNA in the assembled 50S subunit and ribosome. The globular domain of the protein is located near the polypeptide exit tunnel on the outside of the subunit, while an extended beta-hairpin is found that lines the wall of the exit tunnel in the center of the 70S ribosome. The polypeptide is Large ribosomal subunit protein uL22 (rplV) (Prunus armeniaca phytoplasma).